The chain runs to 264 residues: Myozenin-2 (264 aa).

R53 carries the omega-N-methylarginine modification. The segment at 90–135 is disordered; it reads GRVDGSNLEGGSQQGPSTPPNTPDPRSPPNPENIAPGYSGPLKEIP. The residue at position 101 (S101) is a Phosphoserine. Over residues 106–120 the composition is skewed to pro residues; sequence STPPNTPDPRSPPNP. T107 and T111 each carry phosphothreonine. S116 is subject to Phosphoserine.

It belongs to the myozenin family. Interacts via its C-terminus with spectrin repeats 3 and 4 of ACTN2. Interacts with ACTN1, LDB3, MYOT and PPP3CA. In terms of tissue distribution, expressed specifically in heart and skeletal muscle. In skeletal muscle, localized to the soleus and plantaris muscles, which are predominantly composed of slow-twitch fibers.

Its subcellular location is the cytoplasm. It localises to the myofibril. The protein resides in the sarcomere. It is found in the z line. Myozenins may serve as intracellular binding proteins involved in linking Z line proteins such as alpha-actinin, gamma-filamin, TCAP/telethonin, LDB3/ZASP and localizing calcineurin signaling to the sarcomere. Plays an important role in the modulation of calcineurin signaling. May play a role in myofibrillogenesis. This Mus musculus (Mouse) protein is Myozenin-2.